The primary structure comprises 220 residues: Probable nicotinate-nucleotide adenylyltransferase (220 aa).

Belongs to the NadD family.

The enzyme catalyses nicotinate beta-D-ribonucleotide + ATP + H(+) = deamido-NAD(+) + diphosphate. It functions in the pathway cofactor biosynthesis; NAD(+) biosynthesis; deamido-NAD(+) from nicotinate D-ribonucleotide: step 1/1. Catalyzes the reversible adenylation of nicotinate mononucleotide (NaMN) to nicotinic acid adenine dinucleotide (NaAD). In Laribacter hongkongensis (strain HLHK9), this protein is Probable nicotinate-nucleotide adenylyltransferase.